Here is a 486-residue protein sequence, read N- to C-terminus: Glutamate--tRNA ligase (486 aa).

The 'HIGH' region motif lies at 12–22 (PSPTGTPHVGL). The 'KMSKS' region motif lies at 256 to 260 (KLSKR). ATP is bound at residue K259.

Belongs to the class-I aminoacyl-tRNA synthetase family. Glutamate--tRNA ligase type 1 subfamily. Monomer.

It is found in the cytoplasm. The enzyme catalyses tRNA(Glu) + L-glutamate + ATP = L-glutamyl-tRNA(Glu) + AMP + diphosphate. Functionally, catalyzes the attachment of glutamate to tRNA(Glu) in a two-step reaction: glutamate is first activated by ATP to form Glu-AMP and then transferred to the acceptor end of tRNA(Glu). This is Glutamate--tRNA ligase from Mycolicibacterium smegmatis (strain ATCC 700084 / mc(2)155) (Mycobacterium smegmatis).